The primary structure comprises 36 residues: Adenylate kinase (36 aa).

10–15 (GAGKGT) serves as a coordination point for ATP. The interval 30 to 36 (ATGDLFR) is NMP. AMP-binding residues include T31 and R36.

The protein belongs to the adenylate kinase family. Monomer.

The protein resides in the cytoplasm. It catalyses the reaction AMP + ATP = 2 ADP. Its pathway is purine metabolism; AMP biosynthesis via salvage pathway; AMP from ADP: step 1/1. Functionally, catalyzes the reversible transfer of the terminal phosphate group between ATP and AMP. Plays an important role in cellular energy homeostasis and in adenine nucleotide metabolism. The polypeptide is Adenylate kinase (adk) (Streptomyces griseus).